The sequence spans 156 residues: Snaclec 2 (156 aa).

An N-terminal signal peptide occupies residues 1–21; the sequence is MGRFIFLSSGLLVVFLSLSGA. Cystine bridges form between C25–C36, C53–C150, and C125–C142. A C-type lectin domain is found at 32 to 151; it reads FDQHCYRAFD…CGDDYPFVCK (120 aa).

It belongs to the snaclec family. Heterodimer; disulfide-linked. Expressed by the venom gland.

The protein resides in the secreted. Functionally, interferes with one step of hemostasis (modulation of platelet aggregation, or coagulation cascade, for example). The sequence is that of Snaclec 2 from Bitis gabonica (Gaboon adder).